We begin with the raw amino-acid sequence, 1079 residues long: Ubiquitin carboxyl-terminal hydrolase 26 (1079 aa).

Positions 1–12 (MSRPNTRNKSKR) are enriched in basic residues. The interval 1–21 (MSRPNTRNKSKRPRADDCESP) is disordered. One can recognise a USP domain in the interval 106–446 (AGLTNLGATC…DAYMLMYKRI (341 aa)). Cys-115 functions as the Nucleophile in the catalytic mechanism. The active-site Proton acceptor is the His-359. Residues 384–419 (GLHPFGEKPGKSSDKTDQKPQGSSTADSVTNDDNNS) are disordered. A compositionally biased stretch (basic and acidic residues) spans 388–401 (FGEKPGKSSDKTDQ). The span at 402–417 (KPQGSSTADSVTNDDN) shows a compositional bias: polar residues. DUSP domains lie at 495-598 (AYIT…DDFC), 613-715 (DVYR…FPSD), and 738-862 (AVKL…AEIV). The disordered stretch occupies residues 948-972 (EASAAVPVPDRRTSKRSRRTTSGNS). The Ubiquitin-like domain occupies 961–1037 (SKRSRRTTSG…LWVKDSEIYE (77 aa)).

Belongs to the peptidase C19 family.

It is found in the nucleus. It catalyses the reaction Thiol-dependent hydrolysis of ester, thioester, amide, peptide and isopeptide bonds formed by the C-terminal Gly of ubiquitin (a 76-residue protein attached to proteins as an intracellular targeting signal).. Functionally, recognizes and hydrolyzes the peptide bond at the C-terminal Gly of ubiquitin. Involved in the processing of poly-ubiquitin precursors as well as that of ubiquitinated proteins. Deubiquitinates H2BK143ub1 of histone H2B. The chain is Ubiquitin carboxyl-terminal hydrolase 26 (UBP26) from Oryza sativa subsp. japonica (Rice).